The following is a 214-amino-acid chain: Sugar transporter SWEET1 (214 aa).

A run of 7 helical transmembrane segments spans residues 3–23, 38–58, 65–85, 93–113, 125–145, 157–177, and 181–201; these read WMWL…SSGL, IQFL…YYGY, LIIV…AYIL, VVSQ…YFTL, LGLF…ADLA, SFPL…YGWV, and LYIT…FWLF. A MtN3/slv 1 domain is found at 6–89; sequence LLSGACIVFT…MAAYILYSLE (84 aa). Positions 124-207 constitute a MtN3/slv 2 domain; the sequence is QLGLFCSIFT…FWLFSRYPPD (84 aa).

This sequence belongs to the SWEET sugar transporter family.

Its subcellular location is the golgi apparatus membrane. It is found in the cell membrane. Functionally, mediates sugar transport across membranes. This chain is Sugar transporter SWEET1 (slc50a1), found in Xenopus tropicalis (Western clawed frog).